Reading from the N-terminus, the 119-residue chain is Large ribosomal subunit protein bL20c (119 aa).

Belongs to the bacterial ribosomal protein bL20 family.

It is found in the plastid. The protein resides in the chloroplast. In terms of biological role, binds directly to 23S ribosomal RNA and is necessary for the in vitro assembly process of the 50S ribosomal subunit. It is not involved in the protein synthesizing functions of that subunit. This chain is Large ribosomal subunit protein bL20c, found in Amborella trichopoda.